The following is a 353-amino-acid chain: UPF0283 membrane protein YcjF (353 aa).

Residues 1-69 (MTEPLKPRID…LRPKRSLWRK (69 aa)) lie on the Periplasmic side of the membrane. The chain crosses the membrane as a helical span at residues 70-90 (MVMGGLALFGASVVGQGVQWT). Residues 91–99 (MNAWQTQDW) are Cytoplasmic-facing. Residues 100-120 (VALGGCAAGALIIGAGVGSVV) form a helical membrane-spanning segment. The Periplasmic segment spans residues 121–212 (TEWRRLWRLR…ARREISRSAA (92 aa)). A helical transmembrane segment spans residues 213–233 (ESTLMIAVSPLALVDMAFIAW). At 234–353 (RNLRLINRIA…LQKGKTPSEK (120 aa)) the chain is on the cytoplasmic side.

Belongs to the UPF0283 family.

It localises to the cell inner membrane. This chain is UPF0283 membrane protein YcjF (ycjF), found in Escherichia coli O157:H7.